Consider the following 360-residue polypeptide: MPTILVSALEASSNVHLEELRRNLPKDYRFIGVFEGKEALYSPREFSIMGFRDVIGRLGFLLKAHKEMVQLAKQADMVLLMDSSSFNIPLAKKIKKQDPHKKIMYYILPQVWAWKKWRAKSLEKYCDFLGAILPFEVGYYQKKAQYVGHPLLDEIKYYKKDIKGETLVFMPGSRKSEIAKIFPLFVKVAQILEQNEGFKRRVLVVPSFFKGLDLKALYGEDIKLFEISYDAHKSLFEAEFAFICSGTATLEAALIGTPFVLAYRAKTMDFLIARMFVNLHYIGLANIFYNALNNETPGLGESQLHPELIQHFLSVEGLLKAYEEMDRERYFKESLRLREYLASGSARKIANGMAFLLNLT.

The protein belongs to the LpxB family.

It catalyses the reaction a lipid X + a UDP-2-N,3-O-bis[(3R)-3-hydroxyacyl]-alpha-D-glucosamine = a lipid A disaccharide + UDP + H(+). Its pathway is bacterial outer membrane biogenesis; LPS lipid A biosynthesis. Condensation of UDP-2,3-diacylglucosamine and 2,3-diacylglucosamine-1-phosphate to form lipid A disaccharide, a precursor of lipid A, a phosphorylated glycolipid that anchors the lipopolysaccharide to the outer membrane of the cell. The protein is Lipid-A-disaccharide synthase of Helicobacter pylori (strain Shi470).